A 156-amino-acid chain; its full sequence is MNLNATLIGQLIAFAIFVWFCMKYVWPPIIKAIEERQRSIANALASAEAAKKEQSDTKVLVEQEINQARIKAQEIVDLANKRRNEILEEVKIEAEALREKIIEQGHAEIESERKRVQEELRIKVASLAIAGAEKIVGRNIDEAANNDIIDKLVADL.

A helical transmembrane segment spans residues 7 to 27 (LIGQLIAFAIFVWFCMKYVWP).

Belongs to the ATPase B chain family. As to quaternary structure, F-type ATPases have 2 components, F(1) - the catalytic core - and F(0) - the membrane proton channel. F(1) has five subunits: alpha(3), beta(3), gamma(1), delta(1), epsilon(1). F(0) has three main subunits: a(1), b(2) and c(10-14). The alpha and beta chains form an alternating ring which encloses part of the gamma chain. F(1) is attached to F(0) by a central stalk formed by the gamma and epsilon chains, while a peripheral stalk is formed by the delta and b chains.

It is found in the cell inner membrane. F(1)F(0) ATP synthase produces ATP from ADP in the presence of a proton or sodium gradient. F-type ATPases consist of two structural domains, F(1) containing the extramembraneous catalytic core and F(0) containing the membrane proton channel, linked together by a central stalk and a peripheral stalk. During catalysis, ATP synthesis in the catalytic domain of F(1) is coupled via a rotary mechanism of the central stalk subunits to proton translocation. Its function is as follows. Component of the F(0) channel, it forms part of the peripheral stalk, linking F(1) to F(0). This Histophilus somni (strain 129Pt) (Haemophilus somnus) protein is ATP synthase subunit b.